A 202-amino-acid chain; its full sequence is Crustacean calcium-binding protein 23 (202 aa).

S1 is modified (N-acetylserine). EF-hand domains follow at residues 33–68, 69–104, 105–140, and 148–185; these read SGLL…FGLD, LSDG…EMTE, PRKK…KTHP, and TEDE…LSKA. The Ca(2+) site is built by D84, E93, D118, D122, and D129.

In terms of assembly, monomer or disulfide-linked dimers. As to expression, striated muscle and brain.

Possibly acts as a regulatory protein and not as a calcium buffer or transport protein. This chain is Crustacean calcium-binding protein 23, found in Faxonius limosus (Spinycheek crayfish).